A 625-amino-acid polypeptide reads, in one-letter code: Voltage-gated potassium channel KCNC4 (625 aa).

2 disordered regions span residues 1 to 24 (MISS…SKTC) and 65 to 86 (LADP…SSGS). An inactivation gate region spans residues 1-28 (MISSVCVSSYRGRKSGNKPPSKTCLKEE). Topologically, residues 1–227 (MISSVCVSSY…EDPYSSRAAR (227 aa)) are cytoplasmic. A phosphoserine mark is found at Ser-8, Ser-9, Ser-15, and Ser-21. Positions 77–86 (DGGGAGSSGS) are enriched in gly residues. 4 residues coordinate Zn(2+): His-117, Cys-123, Cys-144, and Cys-145. The chain crosses the membrane as a helical span at residues 228-248 (VVAFASLFFILVSITTFCLET). Residues Asn-257 and Asn-266 are each glycosylated (N-linked (GlcNAc...) asparagine). The chain crosses the membrane as a helical span at residues 279–299 (EPILTYIEGVCVMWFTLEFLV). At 300-313 (RIVCCPDTLDFVKN) the chain is on the cytoplasmic side. The chain crosses the membrane as a helical span at residues 314–334 (LLNIIDFVAILPFYLEVGLSG). A helical; Voltage-sensor membrane pass occupies residues 346–365 (FLRVVRFVRILRIFKLTRHF). Topologically, residues 366-381 (VGLRVLGHTLRASTNE) are cytoplasmic. Residues 382–402 (FLLLIIFLALGVLIFATMIYY) form a helical membrane-spanning segment. K(+) contacts are provided by Thr-437, Leu-438, Gly-439, and Tyr-440. Positions 437–442 (TLGYGD) match the Selectivity filter motif. A helical membrane pass occupies residues 453–473 (VGALCALAGVLTIAMPVPVIV). At 474-625 (NNFGMYYSLA…CVPVSHTCAL (152 aa)) the chain is on the cytoplasmic side. A disordered region spans residues 490 to 581 (PKKRKKHVPR…RRALRRSGTR (92 aa)). Over residues 528-543 (AREEGMVERKRADSKQ) the composition is skewed to basic and acidic residues.

This sequence belongs to the potassium channel family. C (Shaw) (TC 1.A.1.2) subfamily. Kv3.4/KCNC4 sub-subfamily. As to quaternary structure, homotetramer. Heterotetramer of potassium channel proteins. Phosphorylation of serine residues in the inactivation gate inhibits rapid channel closure.

Its subcellular location is the membrane. The enzyme catalyses K(+)(in) = K(+)(out). Functionally, voltage-gated potassium channel that opens in response to the voltage difference across the membrane, forming a potassium-selective channel through which potassium ions pass in accordance with their electrochemical gradient. The channel displays rapid activation and inactivation kinetics. The protein is Voltage-gated potassium channel KCNC4 of Rattus norvegicus (Rat).